The following is a 115-amino-acid chain: NADH-ubiquinone oxidoreductase chain 3 (115 aa).

The next 3 helical transmembrane spans lie at 3–23 (VMLA…IAFW), 55–75 (FFLV…LLPL), and 84–104 (LPTM…SLAY).

The protein belongs to the complex I subunit 3 family. In terms of assembly, core subunit of respiratory chain NADH dehydrogenase (Complex I) which is composed of 45 different subunits. Interacts with TMEM186. Interacts with TMEM242.

Its subcellular location is the mitochondrion inner membrane. The catalysed reaction is a ubiquinone + NADH + 5 H(+)(in) = a ubiquinol + NAD(+) + 4 H(+)(out). In terms of biological role, core subunit of the mitochondrial membrane respiratory chain NADH dehydrogenase (Complex I) which catalyzes electron transfer from NADH through the respiratory chain, using ubiquinone as an electron acceptor. Essential for the catalytic activity of complex I. The chain is NADH-ubiquinone oxidoreductase chain 3 from Felis catus (Cat).